Here is a 176-residue protein sequence, read N- to C-terminus: ATP-dependent protease subunit HslV (176 aa).

Residue Thr2 is part of the active site. 3 residues coordinate Na(+): Gly157, Cys160, and Thr163.

This sequence belongs to the peptidase T1B family. HslV subfamily. A double ring-shaped homohexamer of HslV is capped on each side by a ring-shaped HslU homohexamer. The assembly of the HslU/HslV complex is dependent on binding of ATP.

It is found in the cytoplasm. It carries out the reaction ATP-dependent cleavage of peptide bonds with broad specificity.. Its activity is regulated as follows. Allosterically activated by HslU binding. Protease subunit of a proteasome-like degradation complex believed to be a general protein degrading machinery. This Klebsiella pneumoniae (strain 342) protein is ATP-dependent protease subunit HslV.